A 324-amino-acid chain; its full sequence is Zinc finger C2HC domain-containing protein 1A (324 aa).

Residues 15–44 form a C2HC/C3H-type 1 zinc finger; sequence ELLPCKICGRTFFPVALKKHGPICKKTATK. Zn(2+) contacts are provided by cysteine 19, cysteine 22, histidine 34, and cysteine 38. The segment at 43-83 is disordered; the sequence is TKKRKTFDSSRQRAEGTDIPTVKPLKPRPEPPKKPSNWRRK. Positions 48-58 are enriched in basic and acidic residues; the sequence is TFDSSRQRAEG. The segment at 118–147 adopts a C2HC/C3H-type 2 zinc-finger fold; the sequence is DYIQCPYCQRRFNENAADRHINFCKEQAAR. Positions 122, 125, 137, and 141 each coordinate Zn(2+). Disordered stretches follow at residues 150–224 and 236–259; these read NKGK…LSPS and NVKP…LTNK. 2 stretches are compositionally biased toward low complexity: residues 176–187 and 196–215; these read SNSPGTASSGSS and GKTV…SSLG. A Phosphoserine modification is found at serine 222. Threonine 243 bears the Phosphothreonine mark. Serine 291 carries the post-translational modification Phosphoserine.

Belongs to the ZC2HC1 family. Requires Zn(2+) as cofactor.

The polypeptide is Zinc finger C2HC domain-containing protein 1A (ZC2HC1A) (Pongo abelii (Sumatran orangutan)).